A 425-amino-acid polypeptide reads, in one-letter code: Histone-binding protein RBBP7 (425 aa).

The residue at position 2 (Ala2) is an N-acetylalanine. Residue Ser3 is modified to Phosphoserine. Lys4 carries the N6-acetyllysine; alternate modification. Residue Lys4 forms a Glycyl lysine isopeptide (Lys-Gly) (interchain with G-Cter in SUMO2); alternate linkage. Lys4 is covalently cross-linked (Glycyl lysine isopeptide (Lys-Gly) (interchain with G-Cter in ubiquitin); alternate). Thr10 bears the Phosphothreonine mark. WD repeat units follow at residues 47–122 (QWLP…KINH), 128–173 (RARY…LRLR), 181–217 (GLSW…KIVD), 228–269 (VVED…HLVD), 275–312 (VNCL…LHTF), 318–369 (EIFQ…LFIH), and 376–403 (ISDF…IWQM). Ser95 bears the Phosphoserine mark. Residue Lys101 forms a Glycyl lysine isopeptide (Lys-Gly) (interchain with G-Cter in SUMO2) linkage. Lys119 carries the post-translational modification N6-acetyllysine. Lys155 is covalently cross-linked (Glycyl lysine isopeptide (Lys-Gly) (interchain with G-Cter in SUMO2)). The residue at position 159 (Lys159) is an N6-acetyllysine; alternate. A Glycyl lysine isopeptide (Lys-Gly) (interchain with G-Cter in SUMO2); alternate cross-link involves residue Lys159. Phosphoserine is present on Ser354.

It belongs to the WD repeat RBAP46/RBAP48/MSI1 family. Binds directly to helix 1 of the histone fold of histone H4, a region that is not accessible when H4 is in chromatin. Subunit of the type B histone acetyltransferase (HAT) complex, composed of RBBP7 and HAT1. Subunit of the core histone deacetylase (HDAC) complex, which is composed of HDAC1, HDAC2, RBBP4 and RBBP7. The core HDAC complex associates with SIN3A, ARID4B/SAP180, SAP18, SAP30, SAP130, SUDS3/SAP45 and possibly ARID4A/RBP1 and ING1 to form the SIN3 HDAC complex. Component of the nucleosome remodeling and deacetylase (NuRD) repressor complex, composed of core proteins MTA1, MTA2, MTA3, RBBP4, RBBP7, HDAC1, HDAC2, MBD2, MBD3, and peripherally associated proteins CDK2AP1, CDK2AP2, GATAD2A, GATAD2B, CHD3, CHD4 and CHD5. The exact stoichiometry of the NuRD complex is unknown, and some subunits such as MBD2 and MBD3, GATAD2A and GATAD2B, and CHD3, CHD4 and CHD5 define mutually exclusive NuRD complexes. The NuRD complex may interact with MBD3L1. The NuRD complex may interact with MBD3L2. Subunit of the PRC2/EED-EZH2 complex, which is composed of at least EED, EZH2, RBBP4, RBBP7 and SUZ12. The PRC2/EED-EZH2 complex may also associate with HDAC1. Component of the NURF-1 ISWI chromatin remodeling complex (also called the nucleosome-remodeling factor (NURF) complex) at least composed of SMARCA1, BPTF, RBBP4 and RBBP7. Within the complex interacts with SMARCA1. Component of the BPFT-SMARCA1 complex at least composed of SMARCA1, BPFT, RBBP4 and RBBP7; the complex is catalytically inactive and does not remodel chromatin. Within the complex interacts with SMARCA1. Interacts with BRCA1. Interacts with CDK2AP1. Interacts with CENPA. Interacts with CHD3. Interacts with CHD4. Interacts with CREBBP, and this interaction may be enhanced by the binding of phosphorylated CREB1 to CREBBP. Interacts with HDAC7. Interacts with MTA1. Interacts with PWWP2B. Interacts with RB1 (via viral protein-binding domain). Interacts with SUV39H1. Higher levels in brain, thymus, lung, spleen, kidney, testis, and ovary/uterus; lower levels in heart, liver, and muscle.

The protein localises to the nucleus. Functionally, core histone-binding subunit that may target chromatin remodeling factors, histone acetyltransferases and histone deacetylases to their histone substrates in a manner that is regulated by nucleosomal DNA. Component of several complexes which regulate chromatin metabolism. These include the type B histone acetyltransferase (HAT) complex, which is required for chromatin assembly following DNA replication; the core histone deacetylase (HDAC) complex, which promotes histone deacetylation and consequent transcriptional repression; the nucleosome remodeling and histone deacetylase complex (the NuRD complex), which promotes transcriptional repression by histone deacetylation and nucleosome remodeling; and the PRC2/EED-EZH2 complex, which promotes repression of homeotic genes during development; and the NURF (nucleosome remodeling factor) complex. The protein is Histone-binding protein RBBP7 (Rbbp7) of Mus musculus (Mouse).